Here is a 359-residue protein sequence, read N- to C-terminus: MSTKVVNVAVIGAGVVGSAFLDQLLAMKSTITYNLVLLAEAERSLISKDFSPLNVGSDWKAALAASTTKTLPLDDLIAHLKTSPKPVILVDNTSSAYIAGFYTKFVENGISIATPNKKAFSSDLATWKALFSNKPTNGFVYHEATVGAGLPIISFLREIIQTGDEVEKIEGIFSGTLSYIFNEFSTSQANDVKFSDVVKVAKKLGYTEPDPRDDLNGLDVARKVTIVGRISGVEVESPTSFPVQSLIPKPLESVKSADEFLEKLSDYDKDLTQLKKEAATENKVLRFIGKVDVATKSVSVGIEKYDYSHPFASLKGSDNVISIKTKRYTNPVVIQGAGAGAAVTAAGVLGDVIKIAQRL.

4 residues coordinate NAD(+): Ala13, Val15, Val16, and Ala41. Val16 lines the NADP(+) pocket. Val16 is an NADPH binding site. NADPH is bound by residues Lys60, Thr93, Ser94, and Lys117. NAD(+) is bound at residue Thr93. NADP(+) is bound at residue Thr93. Lys117 serves as a coordination point for NADP(+). Na(+)-binding residues include Glu143, Val146, Ala148, and Leu150. Residues Gly205 and Glu208 each coordinate NADP(+). 2 residues coordinate L-homoserine: Glu208 and Asp219. Residue Lys223 is the Proton donor of the active site. A Glycyl lysine isopeptide (Lys-Gly) (interchain with G-Cter in ubiquitin) cross-link involves residue Lys290. Gly340 provides a ligand contact to NAD(+). Residue Gly340 coordinates NADP(+). Gly340 contacts NADPH.

It belongs to the homoserine dehydrogenase family. In terms of assembly, homodimer. Requires a metal cation as cofactor.

It carries out the reaction L-homoserine + NADP(+) = L-aspartate 4-semialdehyde + NADPH + H(+). It catalyses the reaction L-homoserine + NAD(+) = L-aspartate 4-semialdehyde + NADH + H(+). It functions in the pathway amino-acid biosynthesis; L-methionine biosynthesis via de novo pathway; L-homoserine from L-aspartate: step 3/3. Its pathway is amino-acid biosynthesis; L-threonine biosynthesis; L-threonine from L-aspartate: step 3/5. Functionally, catalyzes the conversion of L-aspartate-beta-semialdehyde (L-Asa) to L-homoserine (L-Hse), the third step in the biosynthesis of amino acids that derive from aspartate (the aspartate family of amino acids), including methioinine and threonine, the latter of which is a precursor to isoleucine; production of homoserine leads to a branch-point in the pathway as it can either be O-phosphorylated for processing to threonine, or O-acylated for processing to methionine. This chain is Homoserine dehydrogenase (HOM6), found in Saccharomyces cerevisiae (strain ATCC 204508 / S288c) (Baker's yeast).